The following is a 147-amino-acid chain: MPAKQAESDGLADRCKLRCRRSWGKCGLKLLHLLQPDPFNSCSVVDGIGADYLPPAVGSVKGVEDSETVVSDVYSRFERPLIVYSADRHNAREYLHDVETVSFGNESRWENNISFPTHHSFQSPQAASFRLSANPLQIPQTSFIIRF.

This is an uncharacterized protein from Archaeoglobus fulgidus (strain ATCC 49558 / DSM 4304 / JCM 9628 / NBRC 100126 / VC-16).